The chain runs to 306 residues: Agmatinase (306 aa).

Positions 126, 149, 151, 153, 230, and 232 each coordinate Mn(2+).

Belongs to the arginase family. Agmatinase subfamily. Mn(2+) is required as a cofactor.

The catalysed reaction is agmatine + H2O = urea + putrescine. It functions in the pathway amine and polyamine biosynthesis; putrescine biosynthesis via agmatine pathway; putrescine from agmatine: step 1/1. Functionally, catalyzes the formation of putrescine from agmatine. The protein is Agmatinase of Serratia proteamaculans (strain 568).